The chain runs to 301 residues: CPX chromosomal region candidate gene 1 protein (301 aa).

A disordered region spans residues 1–77 (MSYPTKEGSD…ENSELETEIQ (77 aa)). The segment covering 44-60 (VETNPINREPGTATSQE) has biased composition (polar residues).

Expressed in a variety of fetal tissues.

The sequence is that of CPX chromosomal region candidate gene 1 protein (CPXCR1) from Homo sapiens (Human).